We begin with the raw amino-acid sequence, 302 residues long: GTPase Era (302 aa).

In terms of domain architecture, Era-type G spans 9–177; the sequence is YCGFIAIVGR…EKIVRQSLRE (169 aa). Residues 17–24 are G1; the sequence is GRPNVGKS. 17-24 lines the GTP pocket; sequence GRPNVGKS. Positions 43–47 are G2; it reads QTTRH. Residues 64–67 form a G3 region; that stretch reads DTPG. GTP-binding positions include 64-68 and 126-129; these read DTPGL and NKVD. The tract at residues 126–129 is G4; the sequence is NKVD. Positions 156 to 158 are G5; that stretch reads ISA. Residues 208-285 enclose the KH type-2 domain; sequence TGEELPYSVT…HLELWVKVKS (78 aa).

This sequence belongs to the TRAFAC class TrmE-Era-EngA-EngB-Septin-like GTPase superfamily. Era GTPase family. As to quaternary structure, monomer.

The protein resides in the cytoplasm. Its subcellular location is the cell inner membrane. An essential GTPase that binds both GDP and GTP, with rapid nucleotide exchange. Plays a role in 16S rRNA processing and 30S ribosomal subunit biogenesis and possibly also in cell cycle regulation and energy metabolism. The sequence is that of GTPase Era from Haemophilus influenzae (strain PittGG).